Reading from the N-terminus, the 251-residue chain is Ubiquinone/menaquinone biosynthesis C-methyltransferase UbiE (251 aa).

Residues T74, D95, and N123–A124 contribute to the S-adenosyl-L-methionine site.

Belongs to the class I-like SAM-binding methyltransferase superfamily. MenG/UbiE family.

The catalysed reaction is a 2-demethylmenaquinol + S-adenosyl-L-methionine = a menaquinol + S-adenosyl-L-homocysteine + H(+). The enzyme catalyses a 2-methoxy-6-(all-trans-polyprenyl)benzene-1,4-diol + S-adenosyl-L-methionine = a 5-methoxy-2-methyl-3-(all-trans-polyprenyl)benzene-1,4-diol + S-adenosyl-L-homocysteine + H(+). It participates in quinol/quinone metabolism; menaquinone biosynthesis; menaquinol from 1,4-dihydroxy-2-naphthoate: step 2/2. It functions in the pathway cofactor biosynthesis; ubiquinone biosynthesis. Methyltransferase required for the conversion of demethylmenaquinol (DMKH2) to menaquinol (MKH2) and the conversion of 2-polyprenyl-6-methoxy-1,4-benzoquinol (DDMQH2) to 2-polyprenyl-3-methyl-6-methoxy-1,4-benzoquinol (DMQH2). The polypeptide is Ubiquinone/menaquinone biosynthesis C-methyltransferase UbiE (Shewanella sediminis (strain HAW-EB3)).